Reading from the N-terminus, the 351-residue chain is Peptide chain release factor 1 (351 aa).

Gln229 is modified (N5-methylglutamine).

This sequence belongs to the prokaryotic/mitochondrial release factor family. Methylated by PrmC. Methylation increases the termination efficiency of RF1.

The protein resides in the cytoplasm. In terms of biological role, peptide chain release factor 1 directs the termination of translation in response to the peptide chain termination codons UAG and UAA. The polypeptide is Peptide chain release factor 1 (Cereibacter sphaeroides (strain KD131 / KCTC 12085) (Rhodobacter sphaeroides)).